A 246-amino-acid chain; its full sequence is Myelin protein P0 (246 aa).

A signal peptide spans 1–27 (MFRDLKPAYLFCCSVLYAFSVLRPSQG). Positions 28–143 (ISVSTHHNLH…VGTSSDVHLT (116 aa)) constitute an Ig-like V-type domain. Over 28–150 (ISVSTHHNLH…HLTVYDKIPP (123 aa)) the chain is Extracellular. Cysteine 48 and cysteine 125 form a disulfide bridge. The N-linked (GlcNAc...) (complex) asparagine glycan is linked to asparagine 120. Residues 151–178 (VGAGVVSGAIIGTFLGIILLIVGGLYLF) traverse the membrane as a helical segment. Residues 179 to 246 (RYIVRRRARS…KLSESKRDKK (68 aa)) lie on the Cytoplasmic side of the membrane. Residues 200–246 (AERGKVSGKAGTVSKGPVLYATLDQSKSGKGASEKKSKLSESKRDKK) form a disordered region. The span at 231–246 (ASEKKSKLSESKRDKK) shows a compositional bias: basic and acidic residues.

The protein belongs to the myelin P0 protein family. N-glycan is sulfated. Found only in peripheral nervous system Schwann cells.

Its subcellular location is the cell membrane. Its function is as follows. Creation of an extracellular membrane face which guides the wrapping process and ultimately compacts adjacent lamellae. In Heterodontus francisci (Horn shark), this protein is Myelin protein P0 (mpz).